The primary structure comprises 436 residues: WD repeat domain phosphoinositide-interacting protein 2 (436 aa).

One copy of the WD 1 repeat lies at 182-222; sequence AHDSPLAALAFDASGTKLATASEKGTVIRVFSIPEGQKLFE. The L/FRRG motif signature appears at 223 to 226; it reads FRRG. 2 WD repeats span residues 228 to 267 and 311 to 349; these read KRCV…EKPQ and GHKN…GGEC.

It belongs to the WD repeat PROPPIN family.

The protein resides in the preautophagosomal structure membrane. Its function is as follows. Component of the autophagy machinery that controls the major intracellular degradation process by which cytoplasmic materials are packaged into autophagosomes and delivered to lysosomes for degradation. Involved in an early step of the formation of preautophagosomal structures. In Gallus gallus (Chicken), this protein is WD repeat domain phosphoinositide-interacting protein 2 (WIPI2).